The primary structure comprises 764 residues: Complement factor B (764 aa).

The signal sequence occupies residues 1-25 (MGSNLSPQLCLMPFILGLLSGGVTT). Sushi domains follow at residues 35 to 100 (ESCS…ECRA), 101 to 160 (IHCP…ICDN), and 163 to 220 (GYCS…SCQD). Cystine bridges form between Cys37–Cys76, Cys62–Cys98, Cys103–Cys145, Cys131–Cys158, Cys165–Cys205, and Cys191–Cys218. Residues Asn122 and Asn142 are each glycosylated (N-linked (GlcNAc...) asparagine). The VWFA domain occupies 270 to 469 (NIYLVLDGSD…NLEDVFYQMI (200 aa)). 2 residues coordinate Mg(2+): Ser278 and Ser280. Asn285 carries an N-linked (GlcNAc...) asparagine glycan. Thr353 contacts Mg(2+). N-linked (GlcNAc...) asparagine glycosylation is present at Asn378. One can recognise a Peptidase S1 domain in the interval 477–757 (LCGMVWEHRK…VLPWLKEKLQ (281 aa)). 5 disulfide bridges follow: Cys478–Cys596, Cys511–Cys527, Cys599–Cys615, Cys656–Cys682, and Cys695–Cys725. Active-site charge relay system residues include His526 and Asp576. The Charge relay system role is filled by Ser699.

This sequence belongs to the peptidase S1 family. As to quaternary structure, monomer. Interacts with complement C3b; this interaction is dependent on the presence of Mg(2+). Catalytic component of the C3 convertase of the alternative complement pathway, also named C3bBb, composed of complement factor B Bb and complement C3b. Catalytic component of the C5 convertase of the alternative complement pathway, also named C3bBb3b, composed of complement factor B Bb and additional molecules of complement C3b. Interacts to CFP; this interaction contributes to the stabilization of the active C3-convertase enzyme complex. It depends on Mg(2+) as a cofactor. Mn(2+) is required as a cofactor. Cleaved by CFD following activation of the alternative complement system, generating Ba and Bb chains. Cleavage and activation takes place when CFB is already associated with complement C3b.

The protein resides in the secreted. It localises to the cell surface. The catalysed reaction is Cleavage of Arg-|-Ser bond in complement component C3 alpha-chain to yield C3a and C3b, and Arg-|-Xaa bond in complement component C5 alpha-chain to yield C5a and C5b.. Functionally, precursor of the catalytic component of the C3 and C5 convertase complexes of the alternative pathway of the complement system, a cascade of proteins that leads to phagocytosis and breakdown of pathogens and signaling that strengthens the adaptive immune system. The alternative complement pathway acts as an amplification loop that enhances other complement pathways (classical, lectin and GZMK) by promoting formation of additional C3 and C5 convertases. CFB is cleaved and activated by CFD to generate Ba and Bb chains; Bb chain constituting the catalytic component of the C3 and C5 convertases. Its function is as follows. Serine protease component of the complement C3 and C5 convertase complexes of the alternative complement pathway. Following cleavage and activation by factor D (CFD), forms the C3 convertase together with complement C3b. As part of the C3 convertase, cleaves and activates C3 into C3a anaphylatoxin and C3b opsonin, the next components of the complement pathways. When an additional complement C3b molecule binds to the C3 convertase, forms the C5 convertase, which cleaves and activates C5 into C5a anaphylatoxin and C5b component of the membrane attack complex. Involved in proliferation and differentiation of preactivated B-lymphocytes, rapid spreading of peripheral blood monocytes, stimulation of lymphocyte blastogenesis and lysis of erythrocytes. This is Complement factor B (CFB) from Pan troglodytes (Chimpanzee).